The chain runs to 452 residues: Imidazoleglycerol-phosphate dehydratase (452 aa).

The tract at residues 1–233 is unknown activity; it reads MASPVQALLL…VGASVVLTPG (233 aa). An imidazoleglycerol-phosphate dehydratase region spans residues 234–452; the sequence is LGELLDLVPA…GVPSTKGVLA (219 aa).

Belongs to the imidazoleglycerol-phosphate dehydratase family.

The enzyme catalyses D-erythro-1-(imidazol-4-yl)glycerol 3-phosphate = 3-(imidazol-4-yl)-2-oxopropyl phosphate + H2O. Its pathway is amino-acid biosynthesis; L-histidine biosynthesis; L-histidine from 5-phospho-alpha-D-ribose 1-diphosphate: step 6/9. This is Imidazoleglycerol-phosphate dehydratase (HIS3) from Phytophthora nicotianae (Potato buckeye rot agent).